A 438-amino-acid chain; its full sequence is DNA primase DnaG (438 aa).

The Toprim domain occupies 169-243 (DSIIVVEGRA…DIDYVARAPY (75 aa)). 3 residues coordinate Mg(2+): glutamate 175, aspartate 217, and aspartate 219.

Belongs to the archaeal DnaG primase family. In terms of assembly, forms a ternary complex with MCM helicase and DNA. It depends on Mg(2+) as a cofactor.

It carries out the reaction ssDNA + n NTP = ssDNA/pppN(pN)n-1 hybrid + (n-1) diphosphate.. In terms of biological role, RNA polymerase that catalyzes the synthesis of short RNA molecules used as primers for DNA polymerase during DNA replication. This is DNA primase DnaG from Methanococcus maripaludis (strain C6 / ATCC BAA-1332).